Here is a 273-residue protein sequence, read N- to C-terminus: DnaJ homolog subfamily C member 27 (273 aa).

GTP is bound by residues 23–30 (GNAEVGKS), 71–75 (DMAGH), and 134–137 (NKVD). The J domain occupies 217 to 273 (DSWDMLGVKPGATREEVNKAYRKLAVLLHPDKCVAPGSEDAFKAVVNARTSLLKNIK).

Belongs to the small GTPase superfamily. Rab family.

It localises to the nucleus. GTPase possibly involved in regulation of the MEK/ERK pathway. In Danio rerio (Zebrafish), this protein is DnaJ homolog subfamily C member 27 (dnajc27).